We begin with the raw amino-acid sequence, 308 residues long: ATP synthase gamma chain (308 aa).

It belongs to the ATPase gamma chain family. F-type ATPases have 2 components, CF(1) - the catalytic core - and CF(0) - the membrane proton channel. CF(1) has five subunits: alpha(3), beta(3), gamma(1), delta(1), epsilon(1). CF(0) has three main subunits: a, b and c.

The protein resides in the cell membrane. In terms of biological role, produces ATP from ADP in the presence of a proton gradient across the membrane. The gamma chain is believed to be important in regulating ATPase activity and the flow of protons through the CF(0) complex. The polypeptide is ATP synthase gamma chain (Saccharopolyspora erythraea (strain ATCC 11635 / DSM 40517 / JCM 4748 / NBRC 13426 / NCIMB 8594 / NRRL 2338)).